The chain runs to 214 residues: Probable transaldolase (214 aa).

The active-site Schiff-base intermediate with substrate is Lys-83.

Belongs to the transaldolase family. Type 3B subfamily.

It is found in the cytoplasm. The catalysed reaction is D-sedoheptulose 7-phosphate + D-glyceraldehyde 3-phosphate = D-erythrose 4-phosphate + beta-D-fructose 6-phosphate. Its pathway is carbohydrate degradation; pentose phosphate pathway; D-glyceraldehyde 3-phosphate and beta-D-fructose 6-phosphate from D-ribose 5-phosphate and D-xylulose 5-phosphate (non-oxidative stage): step 2/3. Its function is as follows. Transaldolase is important for the balance of metabolites in the pentose-phosphate pathway. In Alkaliphilus metalliredigens (strain QYMF), this protein is Probable transaldolase.